The following is an 89-amino-acid chain: HssA/B-like protein 15 (89 aa).

This sequence belongs to the hssA/B family.

The sequence is that of HssA/B-like protein 15 (hssl15) from Dictyostelium discoideum (Social amoeba).